We begin with the raw amino-acid sequence, 201 residues long: Ribonuclease HII (201 aa).

One can recognise an RNase H type-2 domain in the interval 12-201 (DLVAGVDEVG…VRELLDVSVQ (190 aa)). Positions 18, 19, and 110 each coordinate a divalent metal cation.

The protein belongs to the RNase HII family. Mn(2+) is required as a cofactor. It depends on Mg(2+) as a cofactor.

The protein resides in the cytoplasm. It catalyses the reaction Endonucleolytic cleavage to 5'-phosphomonoester.. Functionally, endonuclease that specifically degrades the RNA of RNA-DNA hybrids. In Pseudomonas aeruginosa (strain LESB58), this protein is Ribonuclease HII.